The primary structure comprises 42 residues: Large ribosomal subunit protein bL36 (42 aa).

Belongs to the bacterial ribosomal protein bL36 family.

This is Large ribosomal subunit protein bL36 from Anaplasma phagocytophilum (strain HZ).